The chain runs to 819 residues: Protein kinase C-binding protein NELL2 (819 aa).

Positions 1–24 are cleaved as a signal peptide; the sequence is MHAMESRVLLRTFCVILGLEAVWG. N-linked (GlcNAc...) asparagine glycans are attached at residues Asn-56, Asn-228, Asn-296, and Asn-301. A Laminin G-like domain is found at 58 to 231; the sequence is TKAFLFQDSP…AQCPDLNRTC (174 aa). The region spanning 275-334 is the VWFC 1 domain; it reads RTCTMKGTTYREFESWTDGCKNCTCLNGTIQCETLVCPAPDCPAKSAPAYVDGKCCKECK. In terms of domain architecture, EGF-like 1 spans 400-442; that stretch reads GYDFCSEKHTCMENSVCRNLNDRAVCSCRDGFRALREDNAYCE. Cystine bridges form between Cys-404–Cys-416, Cys-410–Cys-425, and Cys-427–Cys-441. Ca(2+)-binding residues include Asp-443, Ile-444, and Glu-446. The 42-residue stretch at 443 to 484 folds into the EGF-like 2; calcium-binding domain; sequence DIDECAEGRHYCRENTMCVNTPGSFLCICQTGYIRIDDYSCT. Intrachain disulfides connect Cys-447/Cys-460, Cys-454/Cys-469, Cys-471/Cys-483, Cys-489/Cys-502, Cys-496/Cys-511, Cys-513/Cys-524, Cys-528/Cys-538, Cys-532/Cys-544, and Cys-546/Cys-555. Ca(2+) contacts are provided by Asn-462, Thr-463, and Ser-466. Residues 485-525 enclose the EGF-like 3; calcium-binding domain; it reads EHDECLTNQHNCDENALCFNTVGGHNCVCKPGYTGNGTTCK. The N-linked (GlcNAc...) asparagine glycan is linked to Asn-520. An EGF-like 4 domain is found at 526-556; that stretch reads AFCKDGCRNGGACIAANVCACPQGFTGPSCE. An O-linked (GlcNAc...) threonine glycan is attached at Thr-551. The Ca(2+) site is built by Asp-558, Ile-559, and Glu-561. Residues 558–604 enclose the EGF-like 5; calcium-binding domain; it reads DIDECSEGFVQCDSRANCINLPGWYHCECRDGYHDNGMFAPGGESCE. 3 disulfide bridges follow: Cys-562/Cys-575, Cys-569/Cys-584, and Cys-586/Cys-603. Positions 577, 578, and 581 each coordinate Ca(2+). The Ca(2+) site is built by Asp-605, Ile-606, and Glu-608. Residues 605–640 enclose the EGF-like 6; calcium-binding domain; that stretch reads DIDECGTGRHSCANDTICFNLDGGYDCRCPHGKNCT. Cystine bridges form between Cys-609/Cys-622, Cys-616/Cys-631, and Cys-633/Cys-639. Asn-618 is a glycosylation site (N-linked (GlcNAc...) asparagine). Ca(2+)-binding residues include Asn-624, Leu-625, and Gly-628. Residue Asn-638 is glycosylated (N-linked (GlcNAc...) asparagine). VWFC domains are found at residues 641 to 696 and 701 to 759; these read GDCV…PECD and SQCL…PRCV.

Homotrimer. Binds to PRKCB. Interacts with NICOL1; this interaction triggers epididymal differentiation. In terms of assembly, binds to PRKCB. As to expression, widely expressed. Expressed in cortical astrocytes but not in neuron. Widely expressed in brain. High expression is observed in telencephalic and diencephalic glutamatergic neurons, while no expression is found in GABAergic and GNRH neurons.

Its subcellular location is the secreted. The protein resides in the cytoplasm. Functionally, plays multiple roles In neural tissues, regulates neuronal proliferation, survival, differentiation, polarization, as well as axon guidance and synaptic functions. Plays an important role in axon development during neuronal differentiation through the MAPK intracellular signaling pathway. Via binding to its receptor ROBO3, plays a role in axon guidance, functioning as a repulsive axon guidance cue that contributes to commissural axon guidance to the midline. Required for neuron survival through the modulation of MAPK signaling pathways too. Involved in the regulation of hypothalamic GNRH secretion and the control of puberty. In terms of biological role, epididymal-secreted protein that signals through a ROS1-pathway to regulate the epididymal initial segment (IS) maturation, sperm maturation and male fertility. Acts as an endogenous inhibitor of PRKCB in glia. The sequence is that of Protein kinase C-binding protein NELL2 (Nell2) from Rattus norvegicus (Rat).